The following is a 216-amino-acid chain: DNA replication complex GINS protein PSF3 (216 aa).

The not essential for folding and stability of GINS complex, but may regulate accessibility to the central complex pore stretch occupies residues 1-16 (MSEAYFPVESGALGPE).

This sequence belongs to the GINS3/PSF3 family. As to quaternary structure, component of the GINS complex which is a heterotetramer of GINS1, GINS2, GINS3 and GINS4. Forms a stable subcomplex with GINS2. GINS complex interacts with DNA primase in vitro. Component of the CMG helicase complex, a hexameric ring of related MCM2-7 subunits stabilized by CDC45 and the tetrameric GINS complex.

The protein resides in the nucleus. It is found in the chromosome. Functionally, required for correct functioning of the GINS complex, a complex that plays an essential role in the initiation of DNA replication, and progression of DNA replication forks. GINS complex is a core component of CDC45-MCM-GINS (CMG) helicase, the molecular machine that unwinds template DNA during replication, and around which the replisome is built. The sequence is that of DNA replication complex GINS protein PSF3 (Gins3) from Mus musculus (Mouse).